The primary structure comprises 701 residues: A-type ATP synthase subunit I (701 aa).

The next 10 helical transmembrane spans lie at 340–360 (WEIS…GLMF), 363–379 (FGNA…FYRY), 388–408 (IPKL…TGLL), 435–455 (LYNL…LLPF), 468–488 (MIFS…LGVI), 498–518 (FLFL…FIFM), 555–575 (GIVW…AILV), 583–603 (WGSA…LLLL), 612–632 (VLVF…MAYL), and 649–669 (IIIL…VVFI).

The protein belongs to the V-ATPase 116 kDa subunit family. In terms of assembly, has multiple subunits with at least A(3), B(3), C, D, E, F, H, I and proteolipid K(x).

It is found in the cell membrane. In terms of biological role, component of the A-type ATP synthase that produces ATP from ADP in the presence of a proton gradient across the membrane. The chain is A-type ATP synthase subunit I from Saccharolobus solfataricus (strain ATCC 35092 / DSM 1617 / JCM 11322 / P2) (Sulfolobus solfataricus).